The chain runs to 1021 residues: Sodium/potassium-transporting ATPase subunit alpha-1 (1021 aa).

Positions 1-5 (MGKGA) are excised as a propeptide. A compositionally biased stretch (basic and acidic residues) spans 1-11 (MGKGAGRDKYE). The interval 1 to 31 (MGKGAGRDKYEPTATSEHGTKKKKAKERDMD) is disordered. The Cytoplasmic portion of the chain corresponds to 6–85 (GRDKYEPTAT…NTLTPPPTTP (80 aa)). Tyr-10 carries the phosphotyrosine modification. Ser-16 carries the phosphoserine; by PKC modification. The segment at 80 to 82 (PPP) is phosphoinositide-3 kinase binding. The helical transmembrane segment at 86–106 (EWVKFCRQLFGGFSLLLWIGS) threads the bilayer. Residues 107–129 (LLCFLAYGITSVMEGEPNSDNLY) are Extracellular-facing. Residues 130 to 150 (LGVVLAAVVIITGCFSYYQEA) traverse the membrane as a helical segment. The Cytoplasmic segment spans residues 151–286 (KSSKIMESFK…GGKTPIAMEI (136 aa)). Residues 214–233 (SSLTGESEPQTRSPDFSNEN) are disordered. A helical transmembrane segment spans residues 287 to 306 (EHFIHLITGVAVFLGVSFFI). The Extracellular portion of the chain corresponds to 307–318 (LSLILEYTWLEA). Residues 319 to 336 (VIFLIGIIVANVPEGLLA) traverse the membrane as a helical segment. Over 337–770 (TVTVCLTLTA…EEGRLIFDNL (434 aa)) the chain is Cytoplasmic. Asp-374 functions as the 4-aspartylphosphate intermediate in the catalytic mechanism. Position 485 (Lys-485) interacts with ATP. Mg(2+) contacts are provided by Asp-715 and Asp-719. Residues 771 to 790 (KKSIAYTLTSNIPEITPFLI) form a helical membrane-spanning segment. Residues 791-800 (FIIANIPLPL) are Extracellular-facing. The chain crosses the membrane as a helical span at residues 801–821 (GTCTILCIDLGTDMVPAISLA). Residues 822 to 841 (YEQAESDIMKRQPRNPKTDK) lie on the Cytoplasmic side of the membrane. Residues 842–864 (LVNERLISMAYGQIGMIQALGGF) traverse the membrane as a helical segment. The Extracellular portion of the chain corresponds to 865 to 916 (FTYFVIMAENGFLPSGLVGIRLQWDDRWINDVEDSYGQQWTFEQRKIVEFTC). Residues 917 to 936 (HTAFFVSIVVVQWADLIICK) form a helical membrane-spanning segment. At 937 to 949 (TRRNSVFQQGMKN) the chain is on the cytoplasmic side. Position 941 is a phosphoserine; by PKA (Ser-941). A helical membrane pass occupies residues 950 to 968 (KILIFGLFEETALAAFLSY). Residues 969 to 983 (CPGMDVALRMYPLKP) lie on the Extracellular side of the membrane. The chain crosses the membrane as a helical span at residues 984-1004 (TWWFCAFPYSLLIFLYDEIRK). Residues 1005–1021 (LIIRRNPGGWVERETYY) are Cytoplasmic-facing.

The protein belongs to the cation transport ATPase (P-type) (TC 3.A.3) family. Type IIC subfamily. The sodium/potassium-transporting ATPase is composed of a catalytic alpha subunit, an auxiliary non-catalytic beta subunit and an additional regulatory subunit. Post-translationally, phosphorylation on Tyr-10 modulates pumping activity.

It localises to the cell membrane. It is found in the sarcolemma. The enzyme catalyses K(+)(out) + Na(+)(in) + ATP + H2O = K(+)(in) + Na(+)(out) + ADP + phosphate + H(+). Functionally, this is the catalytic component of the active enzyme, which catalyzes the hydrolysis of ATP coupled with the exchange of sodium and potassium ions across the plasma membrane. This action creates the electrochemical gradient of sodium and potassium ions, providing the energy for active transport of various nutrients. The chain is Sodium/potassium-transporting ATPase subunit alpha-1 (ATP1A1) from Gallus gallus (Chicken).